Consider the following 366-residue polypeptide: Outer membrane protein IIIA (366 aa).

Positions M1–A22 are cleaved as a signal peptide.

This sequence belongs to the alphaproteobacteria porin family. In terms of assembly, forms calcium-stabilized oligomers. Post-translationally, attached covalently to peptidoglycan.

The protein localises to the cell outer membrane. Its function is as follows. May act as an outer membrane pore. In Rhizobium leguminosarum bv. viciae, this protein is Outer membrane protein IIIA (ropA).